We begin with the raw amino-acid sequence, 418 residues long: Odorant receptor 13a (418 aa).

Residues 1–38 (MFYSYPYKALSFPIQCVWLKLNGSWPLTESSRPWRSQS) are Cytoplasmic-facing. A helical transmembrane segment spans residues 39-59 (LLATAYIVWAWYVIASVGITI). Residues 60-70 (SYQTAFLLNNL) lie on the Extracellular side of the membrane. An N-linked (GlcNAc...) asparagine glycan is attached at Asn-69. The chain crosses the membrane as a helical span at residues 71–91 (SDIIITTENCCTTFMGVLNFV). At 92–140 (RLIHLRLNQRKFRQLIENFSYEIWIPNSSKNNVAAECRRRMVTFSIMTS) the chain is on the cytoplasmic side. A helical membrane pass occupies residues 141 to 161 (LLACLIIMYCVLPLVEIFFGP). At 162-195 (AFDAQNKPFPYKMIFPYDAQSSWIRYVMTYIFTS) the chain is on the extracellular side. Residues 196-216 (YAGICVVTTLFAEDTILGFFI) traverse the membrane as a helical segment. The Cytoplasmic segment spans residues 217–273 (TYTCGQFHLLHQRIAGLFAGSNAELAESIQLERLKRIVEKHNNIISFAKRLEDFFNP). Residues 274 to 294 (ILLANLMISSVLICMVGFQIV) traverse the membrane as a helical segment. The Extracellular segment spans residues 295–299 (TGKNM). The helical transmembrane segment at 300-320 (FIGDYVKFIIYISSALSQLYV) threads the bilayer. Over 321–385 (LCENGDALIK…PVRITAFKFS (65 aa)) the chain is Cytoplasmic. A helical membrane pass occupies residues 386–406 (TLSLQSFTAILSTSISYFTLL). The Extracellular segment spans residues 407–418 (RSVYFDDEKKLD).

It belongs to the insect chemoreceptor superfamily. Heteromeric odorant receptor channel (TC 1.A.69) family. Or1a subfamily. As to quaternary structure, interacts with Orco. Complexes exist early in the endomembrane system in olfactory sensory neurons (OSNs), coupling these complexes to the conserved ciliary trafficking pathway. In terms of tissue distribution, expressed in olfactory sensory neurons in the antenna.

Its subcellular location is the cell membrane. In terms of biological role, odorant receptor which mediates acceptance or avoidance behavior, depending on its substrates. The odorant receptor repertoire encodes a large collection of odor stimuli that vary widely in identity, intensity, and duration. May form a complex with Orco to form odorant-sensing units, providing sensitive and prolonged odorant signaling and calcium permeability. Involved in the behavioral responses to octanol, nonanol, and pentyl acetate. The sequence is that of Odorant receptor 13a (Or13a) from Drosophila melanogaster (Fruit fly).